Here is a 161-residue protein sequence, read N- to C-terminus: Cytochrome c-type biogenesis protein CcmE (161 aa).

At 1–13 the chain is on the cytoplasmic side; sequence MSWLPKSPKARRR. A helical; Signal-anchor for type II membrane protein transmembrane segment spans residues 14 to 34; that stretch reads LMLVAAIAPVLAVAAGLTLWG. The Periplasmic segment spans residues 35–161; the sequence is LSDSISFFYT…QRPEHQGDAL (127 aa). Positions 128 and 132 each coordinate heme.

It belongs to the CcmE/CycJ family.

The protein resides in the cell inner membrane. In terms of biological role, heme chaperone required for the biogenesis of c-type cytochromes. Transiently binds heme delivered by CcmC and transfers the heme to apo-cytochromes in a process facilitated by CcmF and CcmH. In Phenylobacterium zucineum (strain HLK1), this protein is Cytochrome c-type biogenesis protein CcmE.